The sequence spans 305 residues: Ornithine carbamoyltransferase (305 aa).

Carbamoyl phosphate is bound by residues 50–53 (STRT), Q77, R101, and 128–131 (HPCQ). L-ornithine-binding positions include N162, D220, and 224–225 (SM). Carbamoyl phosphate contacts are provided by residues 260–261 (CL) and R288.

This sequence belongs to the aspartate/ornithine carbamoyltransferase superfamily. OTCase family.

Its subcellular location is the cytoplasm. The enzyme catalyses carbamoyl phosphate + L-ornithine = L-citrulline + phosphate + H(+). It participates in amino-acid degradation; L-arginine degradation via ADI pathway; carbamoyl phosphate from L-arginine: step 2/2. Functionally, reversibly catalyzes the transfer of the carbamoyl group from carbamoyl phosphate (CP) to the N(epsilon) atom of ornithine (ORN) to produce L-citrulline. The protein is Ornithine carbamoyltransferase of Akkermansia muciniphila (strain ATCC BAA-835 / DSM 22959 / JCM 33894 / BCRC 81048 / CCUG 64013 / CIP 107961 / Muc).